The chain runs to 394 residues: Carbamoyl phosphate synthase small chain (394 aa).

The segment at 1 to 188 (MIRKERAILA…PLPYAFPTLR (188 aa)) is CPSase. L-glutamine is bound by residues serine 49, glycine 240, and glycine 242. The Glutamine amidotransferase type-1 domain occupies 192–379 (RVVLMDFGIK…IEEIDAFEGA (188 aa)). Cysteine 267 acts as the Nucleophile in catalysis. L-glutamine is bound by residues leucine 268, glutamine 271, asparagine 309, glycine 311, and tyrosine 312. Catalysis depends on residues histidine 352 and glutamate 354.

It belongs to the CarA family. Composed of two chains; the small (or glutamine) chain promotes the hydrolysis of glutamine to ammonia, which is used by the large (or ammonia) chain to synthesize carbamoyl phosphate. Tetramer of heterodimers (alpha,beta)4.

The catalysed reaction is hydrogencarbonate + L-glutamine + 2 ATP + H2O = carbamoyl phosphate + L-glutamate + 2 ADP + phosphate + 2 H(+). It carries out the reaction L-glutamine + H2O = L-glutamate + NH4(+). It functions in the pathway amino-acid biosynthesis; L-arginine biosynthesis; carbamoyl phosphate from bicarbonate: step 1/1. It participates in pyrimidine metabolism; UMP biosynthesis via de novo pathway; (S)-dihydroorotate from bicarbonate: step 1/3. Its function is as follows. Small subunit of the glutamine-dependent carbamoyl phosphate synthetase (CPSase). CPSase catalyzes the formation of carbamoyl phosphate from the ammonia moiety of glutamine, carbonate, and phosphate donated by ATP, constituting the first step of 2 biosynthetic pathways, one leading to arginine and/or urea and the other to pyrimidine nucleotides. The small subunit (glutamine amidotransferase) binds and cleaves glutamine to supply the large subunit with the substrate ammonia. This Deinococcus geothermalis (strain DSM 11300 / CIP 105573 / AG-3a) protein is Carbamoyl phosphate synthase small chain.